Reading from the N-terminus, the 708-residue chain is Meiotic sister-chromatid recombination protein 6, mitochondrial (708 aa).

Residues 1-15 (MLSVRISARQCSVRG) constitute a mitochondrion transit peptide. A compositionally biased stretch (polar residues) spans 19 to 36 (QANNVSQPAKDNATNGSD). A disordered region spans residues 19–44 (QANNVSQPAKDNATNGSDAATEKKGT).

The protein resides in the mitochondrion. Its function is as follows. May be involved in the control of meiotic sister-chromatid recombination. In Kluyveromyces lactis (strain ATCC 8585 / CBS 2359 / DSM 70799 / NBRC 1267 / NRRL Y-1140 / WM37) (Yeast), this protein is Meiotic sister-chromatid recombination protein 6, mitochondrial (MSC6).